Here is a 483-residue protein sequence, read N- to C-terminus: Leukocyte immunoglobulin-like receptor subfamily A member 2 (483 aa).

The signal sequence occupies residues 1 to 23 (MTPILTVLICLGLSLGPRTHVQA). The Extracellular segment spans residues 24 to 449 (GHLPKPTLWA…QHPQDYTVEN (426 aa)). 4 consecutive Ig-like C2-type domains span residues 27–113 (PKPT…DPLE), 117–222 (TGAY…GVSK), 224–313 (PSLS…DPLD), and 324–413 (PSLS…SDPL). Cysteine 49 and cysteine 97 are disulfide-bonded. N-linked (GlcNAc...) asparagine glycans are attached at residues asparagine 64, asparagine 103, and asparagine 138. 2 disulfide bridges follow: cysteine 143–cysteine 195 and cysteine 244–cysteine 295. N-linked (GlcNAc...) asparagine glycans are attached at residues asparagine 279, asparagine 300, and asparagine 339. An intrachain disulfide couples cysteine 344 to cysteine 395. Residue tyrosine 404 is modified to 3'-nitrotyrosine. N-linked (GlcNAc...) asparagine glycosylation occurs at asparagine 429. The chain crosses the membrane as a helical span at residues 450 to 470 (LIRMGVAGLVLVVLGILLFEA). Residues 471–483 (QHSQRSLQDAAGR) lie on the Cytoplasmic side of the membrane.

In terms of assembly, homodimer. In terms of tissue distribution, detected on the surface of all peripheral blood monocytes, neutrophils, basophils and eosinophils (at protein level). Expression levels are very low or not detectable on monocytes, T-cells, B-cells, dendritic cells and natural killer (NK) cells.

Its subcellular location is the cell membrane. The protein localises to the secreted. Its function is as follows. Part of the innate immune responses against microbial infection. Specifically recognizes a set of N-terminally truncated immunoglobulins that are produced via cleavage by proteases from a range of pathogenic bacteria and fungi, including L.pneumophila, M.hyorhinis, S.pneumoniae, S.aureus and C.albicans. Recognizes epitopes that are in part in the variable region of the immunoglobulin light chains, but requires also the constant region for signaling. Binds to a subset of cleaved IgM, IgG3 and IgG4 molecules, but does not bind cleaved IgA1. Binding of N-terminally truncated immunoglobulins mediates activation of neutrophils. In monocytes, activation leads to the release of CSF2, CF3, IL6, CXCL8 and CCL3 and down-regulates responses to bacterial lipopolysaccharide (LPS), possibly via down-regulation of TLR4 expression and reduced signaling via TLR4. In eosinophils, activation by ligand binding leads to the release of RNASE2, IL4 and leukotriene C4. Does not bind class I MHC antigens. The sequence is that of Leukocyte immunoglobulin-like receptor subfamily A member 2 (LILRA2) from Homo sapiens (Human).